The following is a 131-amino-acid chain: MMELLKLNIVTPQGSIFSGDVKSVTLPGAEGEFGVLPGHADLLSLLNAGAIEFEKSNGKTELVAVNWGQVKVDAVSVDVLADGAIAIGGDSESEVAMAIANARTLLEEATDNNVAISSVVSRIESAAKNSL.

The protein belongs to the ATPase epsilon chain family. In terms of assembly, F-type ATPases have 2 components, CF(1) - the catalytic core - and CF(0) - the membrane proton channel. CF(1) has five subunits: alpha(3), beta(3), gamma(1), delta(1), epsilon(1). CF(0) has three main subunits: a, b and c.

It localises to the cell inner membrane. Produces ATP from ADP in the presence of a proton gradient across the membrane. This is ATP synthase epsilon chain from Wolinella succinogenes (strain ATCC 29543 / DSM 1740 / CCUG 13145 / JCM 31913 / LMG 7466 / NCTC 11488 / FDC 602W) (Vibrio succinogenes).